A 145-amino-acid chain; its full sequence is Basic phospholipase A2 cL037 (145 aa).

A signal peptide spans 1-21 (MYPAHLLVLLAVCVSLLGASA). A propeptide spanning residues 22–27 (ILPLPL) is cleaved from the precursor. Disulfide bonds link Cys38/Cys98, Cys54/Cys144, Cys56/Cys72, Cys71/Cys125, Cys78/Cys118, Cys87/Cys111, and Cys105/Cys116. Residues Tyr55, Gly57, and Gly59 each contribute to the Ca(2+) site. His75 is an active-site residue. Ca(2+) is bound at residue Asp76. Residue Asp119 is part of the active site.

The protein belongs to the phospholipase A2 family. Group I subfamily. D49 sub-subfamily. Ca(2+) is required as a cofactor. In terms of tissue distribution, expressed by the venom gland.

It is found in the secreted. It carries out the reaction a 1,2-diacyl-sn-glycero-3-phosphocholine + H2O = a 1-acyl-sn-glycero-3-phosphocholine + a fatty acid + H(+). PLA2 catalyzes the calcium-dependent hydrolysis of the 2-acyl groups in 3-sn-phosphoglycerides. This chain is Basic phospholipase A2 cL037, found in Laticauda semifasciata (Black-banded sea krait).